The following is a 248-amino-acid chain: ATP synthase subunit a (248 aa).

The next 5 membrane-spanning stretches (helical) occupy residues 31–51 (GQVLIASWIAIALILTVVILG), 90–110 (VPYVGTLFLFIFVSNWMGNLF), 129–149 (INTTAGLALLTSIMYFVAGIS), 195–215 (VIAVLVLLVPLFIPVPVMVLF), and 216–236 (LFTGAIQALIFSTLSAAYIGE).

It belongs to the ATPase A chain family. In terms of assembly, F-type ATPases have 2 components, CF(1) - the catalytic core - and CF(0) - the membrane proton channel. CF(1) has five subunits: alpha(3), beta(3), gamma(1), delta(1), epsilon(1). CF(0) has four main subunits: a, b, b' and c.

Its subcellular location is the cellular thylakoid membrane. In terms of biological role, key component of the proton channel; it plays a direct role in the translocation of protons across the membrane. In Synechococcus sp. (strain JA-2-3B'a(2-13)) (Cyanobacteria bacterium Yellowstone B-Prime), this protein is ATP synthase subunit a.